Here is a 568-residue protein sequence, read N- to C-terminus: Glucose-6-phosphate isomerase, cytosolic 1 (568 aa).

The active-site Proton donor is the glutamate 360. Catalysis depends on residues histidine 391 and lysine 516.

The protein belongs to the GPI family. In terms of assembly, homodimer.

The protein resides in the cytoplasm. The catalysed reaction is alpha-D-glucose 6-phosphate = beta-D-fructose 6-phosphate. It functions in the pathway carbohydrate degradation; glycolysis; D-glyceraldehyde 3-phosphate and glycerone phosphate from D-glucose: step 2/4. This chain is Glucose-6-phosphate isomerase, cytosolic 1 (PGIC1), found in Clarkia xantiana (Gunsight clarkia).